The sequence spans 259 residues: Large ribosomal subunit protein uL3c (259 aa).

The N-terminal 37 residues, 1-37 (LKTTPLTLRSPFLHRLPLRALKTHKPTSLHISKSSIS), are a transit peptide targeting the chloroplast. Residues 176 to 211 (MTHGSKSHRQLGSIGAGTTPGRVYKGKKMPGRMGGT) are disordered. A compositionally biased stretch (basic residues) spans 199-211 (YKGKKMPGRMGGT).

The protein belongs to the universal ribosomal protein uL3 family. Part of the 50S ribosomal subunit.

It is found in the plastid. The protein localises to the chloroplast. Its function is as follows. One of the primary rRNA binding proteins, it binds directly near the 3'-end of the 23S rRNA, where it nucleates assembly of the 50S subunit. The sequence is that of Large ribosomal subunit protein uL3c (RPL3) from Nicotiana tabacum (Common tobacco).